The chain runs to 126 residues: Fluoride-specific ion channel FluC (126 aa).

4 consecutive transmembrane segments (helical) span residues 3–23 (MILA…LTGV), 39–59 (TVNV…AHVW), 71–91 (VGVL…ALLV), and 101–121 (AYVA…LALI). Residues glycine 75 and threonine 78 each contribute to the Na(+) site.

It belongs to the fluoride channel Fluc/FEX (TC 1.A.43) family.

It is found in the cell inner membrane. The catalysed reaction is fluoride(in) = fluoride(out). With respect to regulation, na(+) is not transported, but it plays an essential structural role and its presence is essential for fluoride channel function. In terms of biological role, fluoride-specific ion channel. Important for reducing fluoride concentration in the cell, thus reducing its toxicity. The chain is Fluoride-specific ion channel FluC from Rhodospirillum centenum (strain ATCC 51521 / SW).